Here is an 835-residue protein sequence, read N- to C-terminus: MSPNTGESNAAVYASSTQLARALYGGDLVSWIKHTHPGISLELQLDVPVKLIKPGMSQTRPVTVVRAPMGSGKTTALLEWLQHALKADISVLVVSCRRSFTQTLIQRFNDAGLSGFVTYLTSETYIMGFKRLIVQLESLHRVSSEAIDSYDVLILDEVMSVIGQLYSPTMRRLSAVDSLLYRLLNRCSQIIAMDATVNSQFIDLISGLRGDENIHTIVCTYAGVGFSGRTCTILRDMGIDTLVRVIKRSPEHEDVRTIHQLRGTFFDELALRLQCGHNICIFSSTLSFSELVAQFCAIFTDSILILNSTRPLCNVNEWKHFRVLVYTTVVTVGLSFDMAHFHSMFAYIKPMSYGPDMVSVYQSLGRVRLLLLNEVLMYVDGSRTRCGPLFSPMLLNFTIANKFQWFPTHTQITNKLCCAFRQRCANAFTRSNTHLFSRFKYKHLFERCSLWSLADSINILQTLLASNQILVVLDGMGPITDVSPVQFCAFIHDLRHSANAVASCMRSLRQDNDSCLTDFGPSGFMADNITAFMEKYLMESINTEEQIKVFKALACPIEQPRLVNTAILGACIRIPEALEAFDVFQKIYTHYASGWFPVLDKTGEFSIATITTAPNLTTHWELFRRCAYIAKTLKWNPSTEGCVTQVLDTDINTLFNQHGDSLAQLIFEVMRCNVTDAKIILNRPVWRTTGFLDGCHNQCFRPIPTKHEYNIALFRLIWEQLFGARVTKSTQTFPGSTRVKNLKKKDLETLLDSINVDRSACRTYRQLYNLLMSHRHSFSQQRYKITAPAWARHVYFQAHQMHLAPHAEAMLQLALSELSPGSWPRINGAVNFESL.

The 162-residue stretch at P54–H215 folds into the Helicase ATP-binding domain. A67–T74 lines the ATP pocket.

The protein belongs to the herpesviridae OriBP family. In terms of assembly, homodimer. Interacts with the major DNA-binding protein. Interacts with the helicase/primase component 52 and the polymerase accessory protein.

The protein resides in the host nucleus. Its function is as follows. Functions as a docking protein to recruit essential components of the viral replication machinery to viral DNA origins. In the presence of the major DNA-binding protein, opens dsDNA leading to a conformational change in the origin that facilitates DNA unwinding and subsequent replication. This Varicella-zoster virus (strain Oka vaccine) (HHV-3) protein is Replication origin-binding protein.